Consider the following 154-residue polypeptide: Interleukin-2 (154 aa).

An N-terminal signal peptide occupies residues 1–20 (MYRMQLLSCIALSLALVTNS). The O-linked (GalNAc...) threonine glycan is linked to T23. C78 and C126 are disulfide-bonded.

Belongs to the IL-2 family.

The protein resides in the secreted. Functionally, cytokine produced by activated CD4-positive helper T-cells and to a lesser extend activated CD8-positive T-cells and natural killer (NK) cells that plays pivotal roles in the immune response and tolerance. Binds to a receptor complex composed of either the high-affinity trimeric IL-2R (IL2RA/CD25, IL2RB/CD122 and IL2RG/CD132) or the low-affinity dimeric IL-2R (IL2RB and IL2RG). Interaction with the receptor leads to oligomerization and conformation changes in the IL-2R subunits resulting in downstream signaling starting with phosphorylation of JAK1 and JAK3. In turn, JAK1 and JAK3 phosphorylate the receptor to form a docking site leading to the phosphorylation of several substrates including STAT5. This process leads to activation of several pathways including STAT, phosphoinositide-3-kinase/PI3K and mitogen-activated protein kinase/MAPK pathways. Functions as a T-cell growth factor and can increase NK-cell cytolytic activity as well. Promotes strong proliferation of activated B-cells and subsequently immunoglobulin production. Plays a pivotal role in regulating the adaptive immune system by controlling the survival and proliferation of regulatory T-cells, which are required for the maintenance of immune tolerance. Moreover, participates in the differentiation and homeostasis of effector T-cell subsets, including Th1, Th2, Th17 as well as memory CD8-positive T-cells. The polypeptide is Interleukin-2 (IL2) (Macaca fascicularis (Crab-eating macaque)).